The chain runs to 620 residues: Chaperone protein HtpG (620 aa).

The interval 1-334 (MTTTDTAPQT…SEDLPLNLSR (334 aa)) is a; substrate-binding. The interval 335 to 548 (EMLQNNPQLV…GQGPDRALER (214 aa)) is b. Positions 549-620 (MLAQQNRGGA…RINRLVLRAL (72 aa)) are c.

Belongs to the heat shock protein 90 family. As to quaternary structure, homodimer.

It localises to the cytoplasm. In terms of biological role, molecular chaperone. Has ATPase activity. The protein is Chaperone protein HtpG of Rhodopseudomonas palustris (strain BisA53).